The chain runs to 219 residues: DnaJ homolog subfamily C member 30, mitochondrial (219 aa).

The transit peptide at Met1–Tyr38 directs the protein to the mitochondrion. The J domain occupies Ala42–Leu107. The disordered stretch occupies residues Ser109–Pro148. Residues Asp127–Pro138 show a composition bias toward pro residues. A helical transmembrane segment spans residues Ala202–Arg218.

As to quaternary structure, associates with the ATP synthase complex. Interacts with MT-ATP6; interaction is direct. Interacts with ATP5MC2; interaction is direct. In brain, expressed in gray matter structures.

It is found in the mitochondrion inner membrane. Its function is as follows. Mitochondrial protein enriched in neurons that acts as a regulator of mitochondrial respiration. Associates with the ATP synthase complex and facilitates ATP synthesis. May be a chaperone protein involved in the turnover of the subunits of mitochondrial complex I N-module. It facilitates the degradation of N-module subunits damaged by oxidative stress, and contributes to complex I functional efficiency. In Mus musculus (Mouse), this protein is DnaJ homolog subfamily C member 30, mitochondrial.